The primary structure comprises 311 residues: MSVVNNRVALKHLVSMEHLTNEEVLGLISRGSEYKAGKVAIKDNSRHFAANLFFENSTRTHKSFEVAENKLGLRVLDFNADTSAVNKGETLYDTVLTMSALGTEICVIRHPEDDYYQQLIDSPTITASIVNGGDGSGQHPSQCLLDLLTIYEEFGHFDGLKIAIAGDLTHSRVAKSNMQILKRLGAELYFYGPEQWYSSEFDSYGRYMAIDHIIDQLDVLMLLRVQHERHDGSQSFSKEDYHRQFGLTEERYRRLKDSAIIMHPAPVNRDVEIADHLVEAPKARIVAQMANGVFVRMAIIEAILNGRNDKV.

Residues Arg59 and Thr60 each contribute to the carbamoyl phosphate site. Position 87 (Lys87) interacts with L-aspartate. Carbamoyl phosphate contacts are provided by Arg109, His139, and Gln142. 2 residues coordinate L-aspartate: Arg172 and Arg224. Carbamoyl phosphate is bound by residues Ala265 and Pro266.

This sequence belongs to the aspartate/ornithine carbamoyltransferase superfamily. ATCase family. As to quaternary structure, heterododecamer (2C3:3R2) of six catalytic PyrB chains organized as two trimers (C3), and six regulatory PyrI chains organized as three dimers (R2).

It carries out the reaction carbamoyl phosphate + L-aspartate = N-carbamoyl-L-aspartate + phosphate + H(+). The protein operates within pyrimidine metabolism; UMP biosynthesis via de novo pathway; (S)-dihydroorotate from bicarbonate: step 2/3. Its function is as follows. Catalyzes the condensation of carbamoyl phosphate and aspartate to form carbamoyl aspartate and inorganic phosphate, the committed step in the de novo pyrimidine nucleotide biosynthesis pathway. The polypeptide is Aspartate carbamoyltransferase catalytic subunit (Streptococcus equi subsp. equi (strain 4047)).